Reading from the N-terminus, the 170-residue chain is Envelope protein 168 (170 aa).

Residue Met1 is a topological domain, intravirion. The helical transmembrane segment at 2-22 (FYPVVQILIGIILVIILILGF) threads the bilayer. Residues 23-170 (YHLKRKPPKK…TVMGIARNVL (148 aa)) are Virion surface-facing.

It belongs to the asfivirus envelope protein p22 family.

It is found in the virion membrane. Its subcellular location is the host cell membrane. The protein is Envelope protein 168 of African swine fever virus (isolate Tick/South Africa/Pretoriuskop Pr4/1996) (ASFV).